The chain runs to 326 residues: Putative ribose-phosphate pyrophosphokinase 2 (326 aa).

Residues 43–45 (DGE) and 102–103 (RQ) each bind ATP. His136 lines the Mg(2+) pocket. Residues Asp225 and 229–233 (NTGKT) contribute to the D-ribose 5-phosphate site.

As to quaternary structure, homohexamer. Mg(2+) serves as cofactor.

Its subcellular location is the cytoplasm. The catalysed reaction is D-ribose 5-phosphate + ATP = 5-phospho-alpha-D-ribose 1-diphosphate + AMP + H(+). The protein operates within metabolic intermediate biosynthesis; 5-phospho-alpha-D-ribose 1-diphosphate biosynthesis; 5-phospho-alpha-D-ribose 1-diphosphate from D-ribose 5-phosphate (route I): step 1/1. Involved in the biosynthesis of the central metabolite phospho-alpha-D-ribosyl-1-pyrophosphate (PRPP) via the transfer of pyrophosphoryl group from ATP to 1-hydroxyl of ribose-5-phosphate (Rib-5-P). This Streptococcus pyogenes serotype M6 (strain ATCC BAA-946 / MGAS10394) protein is Putative ribose-phosphate pyrophosphokinase 2.